Reading from the N-terminus, the 1098-residue chain is uncharacterized protein (1098 aa).

This is an uncharacterized protein from Invertebrate iridescent virus 3 (IIV-3).